Here is a 202-residue protein sequence, read N- to C-terminus: Large ribosomal subunit protein mL40 (202 aa).

Residues 42–79 (IQHQQTASYASKGKSGPPAGMFSGQKAGSKKSKGPKQV) are disordered.

This sequence belongs to the mitochondrion-specific ribosomal protein mL40 family. Component of the mitochondrial large ribosomal subunit (mt-LSU). Mature N.crassa 74S mitochondrial ribosomes consist of a small (37S) and a large (54S) subunit. The 37S small subunit contains a 16S ribosomal RNA (16S mt-rRNA) and 32 different proteins. The 54S large subunit contains a 23S rRNA (23S mt-rRNA) and 42 different proteins. mL40 is binding to NAD.

The protein localises to the mitochondrion. Functionally, component of the mitochondrial ribosome (mitoribosome), a dedicated translation machinery responsible for the synthesis of mitochondrial genome-encoded proteins, including at least some of the essential transmembrane subunits of the mitochondrial respiratory chain. The mitoribosomes are attached to the mitochondrial inner membrane and translation products are cotranslationally integrated into the membrane. The polypeptide is Large ribosomal subunit protein mL40 (mrpl28) (Neurospora crassa (strain ATCC 24698 / 74-OR23-1A / CBS 708.71 / DSM 1257 / FGSC 987)).